A 66-amino-acid chain; its full sequence is Large ribosomal subunit protein bL35 (66 aa).

The protein belongs to the bacterial ribosomal protein bL35 family.

This Synechococcus sp. (strain ATCC 27144 / PCC 6301 / SAUG 1402/1) (Anacystis nidulans) protein is Large ribosomal subunit protein bL35.